Consider the following 524-residue polypeptide: Probable plastidic glucose transporter 1 (524 aa).

The next 12 membrane-spanning stretches (helical) occupy residues 88–108 (MANFLFGYHIGVMNGPIVSIA), 122–142 (LVVSIFIAGAFIGSIVAGPLV), 151–171 (FQIFTIPLILGALVSAQAHSL), 179–199 (FLVGLGIGVNTVLVPIYISEV), 208–228 (LGTLCQIGTCLGIIFSLLLGI), 239–259 (TMLYVASMPGFLLALGMQFAV), 320–340 (VAFIGGSLFVLQQFAGINGVL), 357–377 (QASLYVGVTNFAGALCASYLI), 386–406 (LIGSYLGMAVSMFLIVYAVGF), 420–440 (GTLMYIFSFAIGAGPVTGLII), 452–472 (IMGFSFSVHWVSNFLVGLFFL), and 483–503 (VYASFGSVSLLAAAFSHLFTV).

Belongs to the major facilitator superfamily. Sugar transporter (TC 2.A.1.1) family.

Its subcellular location is the plastid. The protein localises to the chloroplast membrane. In terms of biological role, may be involved in the efflux of glucose towards the cytosol. This chain is Probable plastidic glucose transporter 1, found in Arabidopsis thaliana (Mouse-ear cress).